A 360-amino-acid polypeptide reads, in one-letter code: METITVGLDERSYPIFFNVNELSMLGSLCADQKLGQRVAVVTNPTVGAWYFEPVRESLVSAGFSVHKIEVPDGEEYKNSDTLKDIYDWLIDFGLDRGSFIVALGGGVIGDMAGYAAATYLRGIPFVQVPTTLLAQVDSSVGGKTGINHEKGKNLIGAFYQPRLVMIDVAVLDTLAEREYLSGLAEMAKYGVVLDAEFFRFMYDNVEKLLSRDKECLLAAVKRSCALKASVVEQDEREGGLRAVLNYGHTIGHAVETLTGYRQYLHGEAVAIGMAQAAKISESMGFSSSDDTERVLSLLSKLKLPQDLPPFSPSEYIEAICHDKKVRDGGLNFVFNKNLGSFTIATVADVSQLLRICGIGE.

NAD(+) contacts are provided by residues 72 to 77 (DGEEYK), 106 to 110 (GVIGD), 130 to 131 (TT), lysine 143, and lysine 152. The Zn(2+) site is built by glutamate 185, histidine 248, and histidine 265.

This sequence belongs to the sugar phosphate cyclases superfamily. Dehydroquinate synthase family. Co(2+) serves as cofactor. The cofactor is Zn(2+). NAD(+) is required as a cofactor.

It is found in the cytoplasm. The catalysed reaction is 7-phospho-2-dehydro-3-deoxy-D-arabino-heptonate = 3-dehydroquinate + phosphate. It functions in the pathway metabolic intermediate biosynthesis; chorismate biosynthesis; chorismate from D-erythrose 4-phosphate and phosphoenolpyruvate: step 2/7. Catalyzes the conversion of 3-deoxy-D-arabino-heptulosonate 7-phosphate (DAHP) to dehydroquinate (DHQ). The sequence is that of 3-dehydroquinate synthase from Geotalea uraniireducens (strain Rf4) (Geobacter uraniireducens).